The sequence spans 354 residues: Protein OPG055 (354 aa).

This sequence belongs to the orthopoxvirus OPG055 family.

Functionally, stimulates increases in peripheral microtubule dynamics and may increase the motility of the infected cells, contributing to cell-to-cell spread of the virus. Seems to inhibit the signaling via the GTPase RHOA and DIAPH1/mDia. The protein is Protein OPG055 (OPG055) of Cynomys gunnisoni (Gunnison's prairie dog).